Reading from the N-terminus, the 212-residue chain is Proteasome subunit beta 2 (212 aa).

Positions 1–13 (MSVDEKVARALKG) are cleaved as a propeptide — removed in mature form; by autocatalysis. The active-site Nucleophile is Thr-14.

This sequence belongs to the peptidase T1B family. The 20S proteasome core is composed of 14 alpha and 14 beta subunits that assemble into four stacked heptameric rings, resulting in a barrel-shaped structure. The two inner rings, each composed of seven catalytic beta subunits, are sandwiched by two outer rings, each composed of seven alpha subunits. The catalytic chamber with the active sites is on the inside of the barrel. Has a gated structure, the ends of the cylinder being occluded by the N-termini of the alpha-subunits. Is capped at one or both ends by the proteasome regulatory ATPase, PAN.

Its subcellular location is the cytoplasm. The enzyme catalyses Cleavage of peptide bonds with very broad specificity.. Its activity is regulated as follows. The formation of the proteasomal ATPase PAN-20S proteasome complex, via the docking of the C-termini of PAN into the intersubunit pockets in the alpha-rings, triggers opening of the gate for substrate entry. Interconversion between the open-gate and close-gate conformations leads to a dynamic regulation of the 20S proteasome proteolysis activity. Its function is as follows. Component of the proteasome core, a large protease complex with broad specificity involved in protein degradation. This is Proteasome subunit beta 2 from Ignicoccus hospitalis (strain KIN4/I / DSM 18386 / JCM 14125).